We begin with the raw amino-acid sequence, 168 residues long: Skp-like protein (168 aa).

The signal sequence occupies residues 1 to 22; the sequence is MRKFTQFVLITAAIMAAPSAFA.

The protein belongs to the Skp family.

The protein is Skp-like protein of Pseudomonas aeruginosa (strain ATCC 15692 / DSM 22644 / CIP 104116 / JCM 14847 / LMG 12228 / 1C / PRS 101 / PAO1).